Consider the following 473-residue polypeptide: 3-isopropylmalate dehydratase large subunit (473 aa).

Residues Cys351, Cys414, and Cys417 each contribute to the [4Fe-4S] cluster site.

Belongs to the aconitase/IPM isomerase family. LeuC type 1 subfamily. In terms of assembly, heterodimer of LeuC and LeuD. [4Fe-4S] cluster serves as cofactor.

The catalysed reaction is (2R,3S)-3-isopropylmalate = (2S)-2-isopropylmalate. It functions in the pathway amino-acid biosynthesis; L-leucine biosynthesis; L-leucine from 3-methyl-2-oxobutanoate: step 2/4. Functionally, catalyzes the isomerization between 2-isopropylmalate and 3-isopropylmalate, via the formation of 2-isopropylmaleate. This chain is 3-isopropylmalate dehydratase large subunit, found in Polaromonas sp. (strain JS666 / ATCC BAA-500).